A 266-amino-acid polypeptide reads, in one-letter code: uncharacterized protein (266 aa).

Residues 1 to 22 form the signal peptide; the sequence is MGYFKRVVLYIIVMVVSVFIIG. The N-palmitoyl cysteine moiety is linked to residue Cys23. Cys23 carries S-diacylglycerol cysteine lipidation.

It belongs to the staphylococcal tandem lipoprotein family.

The protein localises to the cell membrane. This is an uncharacterized protein from Staphylococcus aureus (strain N315).